The primary structure comprises 258 residues: Ribosome maturation factor RimP (258 aa).

2 disordered regions span residues proline 48–alanine 88 and isoleucine 212–aspartate 258. Residues lysine 215–glycine 224 show a composition bias toward basic residues.

This sequence belongs to the RimP family.

Its subcellular location is the cytoplasm. Required for maturation of 30S ribosomal subunits. The chain is Ribosome maturation factor RimP from Desulfovibrio desulfuricans (strain ATCC 27774 / DSM 6949 / MB).